Consider the following 428-residue polypeptide: 4-hydroxy-3-methylbut-2-en-1-yl diphosphate synthase (flavodoxin) (428 aa).

Positions 300, 303, 346, and 353 each coordinate [4Fe-4S] cluster.

This sequence belongs to the IspG family. It depends on [4Fe-4S] cluster as a cofactor.

The catalysed reaction is (2E)-4-hydroxy-3-methylbut-2-enyl diphosphate + oxidized [flavodoxin] + H2O + 2 H(+) = 2-C-methyl-D-erythritol 2,4-cyclic diphosphate + reduced [flavodoxin]. It functions in the pathway isoprenoid biosynthesis; isopentenyl diphosphate biosynthesis via DXP pathway; isopentenyl diphosphate from 1-deoxy-D-xylulose 5-phosphate: step 5/6. In terms of biological role, converts 2C-methyl-D-erythritol 2,4-cyclodiphosphate (ME-2,4cPP) into 1-hydroxy-2-methyl-2-(E)-butenyl 4-diphosphate. The polypeptide is 4-hydroxy-3-methylbut-2-en-1-yl diphosphate synthase (flavodoxin) (Methylobacillus flagellatus (strain ATCC 51484 / DSM 6875 / VKM B-1610 / KT)).